Consider the following 705-residue polypeptide: Voltage-dependent calcium channel beta subunit-associated regulatory protein (705 aa).

Residues 1–45 (MQPTATMATAATTTTTTTATVALTTSWDNATGRPTAEPDPILDNY) are Extracellular-facing. N29 carries N-linked (GlcNAc...) asparagine glycosylation. The chain crosses the membrane as a helical; Signal-anchor for type III membrane protein span at residues 46–66 (VLLVVVMSLFVGGTLVVLSGV). The Cytoplasmic portion of the chain corresponds to 67–705 (LLLCKRCWDV…APTSPDHSPA (639 aa)). Disordered stretches follow at residues 91–113 (TTTY…EDPE) and 212–284 (GKAL…GSGA). Polar residues predominate over residues 245–254 (PSASSDSGEG). Residues 267–284 (GGPGAAAGPGEAGPGSGA) show a composition bias toward gly residues. 2 positions are modified to phosphoserine: S299 and S304. 4 disordered regions span residues 316 to 353 (PSQR…DAPQ), 369 to 436 (FPHP…SYRD), 448 to 540 (AAAS…RRDY), and 559 to 655 (HFDD…CPGS). A compositionally biased stretch (acidic residues) spans 344–353 (TEQEEGDAPQ). Pro residues predominate over residues 371-382 (HPRPFLASPPPA). The segment covering 383–397 (LGRLEAAEAAGGASP) has biased composition (low complexity). Residues 479–488 (AFPPPSPPAP) show a composition bias toward pro residues. Residues 489–499 (RPKDGEARRLL) show a composition bias toward basic and acidic residues. A phosphoserine mark is found at S507 and S528. Positions 567–585 (ARHRARAHPHARKQWQRGR) are enriched in basic residues. Residues 591–614 (GARAAPALAGTPAPPAGAARPARA) show a composition bias toward low complexity. S621 carries the post-translational modification Phosphoserine. Position 698 is a phosphothreonine (T698). Residues S699 and S703 each carry the phosphoserine modification.

As to quaternary structure, interacts with voltage-dependent calcium channels CACNB1, CACNB2, CACNB3 and CACNB4 beta subunits; prevents their interaction with the CACNA1C alpha subunit thereby negatively regulating the activity of the corresponding calcium channels.

Its subcellular location is the cytoplasmic vesicle. It localises to the secretory vesicle. The protein localises to the synaptic vesicle membrane. It is found in the cell membrane. The protein resides in the cell projection. Its subcellular location is the growth cone. Functionally, negatively regulates voltage-gated calcium channels by preventing the interaction between their alpha and beta subunits. Thereby, negatively regulates calcium channels activity at the plasma membrane and indirectly inhibits calcium-regulated exocytosis. The chain is Voltage-dependent calcium channel beta subunit-associated regulatory protein from Homo sapiens (Human).